Consider the following 442-residue polypeptide: Capsid vertex component 1 (442 aa).

This sequence belongs to the herpesviridae CVC1 protein family. In terms of assembly, interacts (via C-terminus) with capsid vertex component 2/CVC2.

The protein localises to the virion. It is found in the host nucleus. In terms of biological role, capsid vertex-specific component that plays a role during viral DNA encapsidation, assuring correct genome cleavage and presumably stabilizing capsids that contain full-length viral genomes. The protein is Capsid vertex component 1 of Human herpesvirus 6A (strain Uganda-1102) (HHV-6 variant A).